A 160-amino-acid polypeptide reads, in one-letter code: uncharacterized protein (160 aa).

Y49 is subject to Phosphotyrosine.

In terms of biological role, may be involved in the assembly, structure, or function of the flagellum. May polymerize to form a filamentous structure that is part of the flagellum. This is an uncharacterized protein from Bacillus subtilis (strain 168).